A 335-amino-acid polypeptide reads, in one-letter code: Ankyrin repeat and SOCS box protein 1 (335 aa).

6 ANK repeats span residues 36-68 (CEDTRLHDAAYVGDLQTLRSLLQEESYRSRINE), 77-106 (LPCTPLRIAATAGHGSCVDFLIRKGAEVDL), 110-139 (KGQTALYVAVVNGHLESTQILLEAGADPNG), 143-172 (HRSTPVYHASRVGRADILKALIRYGADVDV), 191-220 (LVVCPLYISAAYHNLQCFRLLLLAGANPDF), and 235-265 (SPGCVMDAVLRHGCEAAFVSLLVEFGANLNL). The SOCS box domain occupies 286-335 (LQVFKEARSVPRTLLCLCRVAVRRALGKHRLHLIPSLPLPDPIKKFLLHE).

It belongs to the ankyrin SOCS box (ASB) family. In terms of assembly, interacts with CUL5 and RNF7. Interacts with TAB2 and TAB3.

It is found in the cytoplasm. It participates in protein modification; protein ubiquitination. Probable substrate-recognition component of a SCF-like ECS (Elongin-Cullin-SOCS-box protein) E3 ligase complex which mediates the ubiquitination and subsequent proteasomal degradation of target proteins. Mediates Notch-induced ubiquitination and degradation of TCF3/E2A and JAK2. Functions as a tumor suppressor by enhancing CHCHD3 'Lys-48'-linked ubiquitination, leading to inhibition of the CHCHD3/ROS signaling pathway. Suppresses TAB2-linked 'Lys-48' polyubiquitination and consequently facilitates the initiation of NF-kappa-B and MAPK signaling cascades. May play a role in testis development. The chain is Ankyrin repeat and SOCS box protein 1 (ASB1) from Homo sapiens (Human).